The chain runs to 78 residues: uncharacterized protein (78 aa).

This is an uncharacterized protein from Escherichia coli O6:H1 (strain CFT073 / ATCC 700928 / UPEC).